Reading from the N-terminus, the 630-residue chain is 1-deoxy-D-xylulose-5-phosphate synthase (630 aa).

Residues histidine 73 and 114–116 (SHA) each bind thiamine diphosphate. Aspartate 146 serves as a coordination point for Mg(2+). Thiamine diphosphate-binding positions include 147–148 (GA), asparagine 176, phenylalanine 287, and glutamate 371. Asparagine 176 contacts Mg(2+).

This sequence belongs to the transketolase family. DXPS subfamily. As to quaternary structure, homodimer. It depends on Mg(2+) as a cofactor. The cofactor is thiamine diphosphate.

It carries out the reaction D-glyceraldehyde 3-phosphate + pyruvate + H(+) = 1-deoxy-D-xylulose 5-phosphate + CO2. Its pathway is metabolic intermediate biosynthesis; 1-deoxy-D-xylulose 5-phosphate biosynthesis; 1-deoxy-D-xylulose 5-phosphate from D-glyceraldehyde 3-phosphate and pyruvate: step 1/1. Functionally, catalyzes the acyloin condensation reaction between C atoms 2 and 3 of pyruvate and glyceraldehyde 3-phosphate to yield 1-deoxy-D-xylulose-5-phosphate (DXP). The protein is 1-deoxy-D-xylulose-5-phosphate synthase of Corynebacterium jeikeium (strain K411).